Consider the following 312-residue polypeptide: Fe-S cluster assembly protein DRE2 (312 aa).

Residues L7–V139 form an N-terminal SAM-like domain region. A linker region spans residues L140–L204. Positions 214, 225, 228, and 230 each coordinate [2Fe-2S] cluster. The segment at C214–C230 is fe-S binding site A. Positions 275, 278, 286, and 289 each coordinate [4Fe-4S] cluster. Short sequence motifs (cx2C motif) lie at residues C275–C278 and C286–C289. The tract at residues C275–C289 is fe-S binding site B.

The protein belongs to the anamorsin family. Monomer. Interacts with TAH18. Interacts with MIA40. The cofactor is [2Fe-2S] cluster. [4Fe-4S] cluster serves as cofactor.

The protein resides in the cytoplasm. It localises to the mitochondrion intermembrane space. Functionally, component of the cytosolic iron-sulfur (Fe-S) protein assembly (CIA) machinery required for the maturation of extramitochondrial Fe-S proteins. Part of an electron transfer chain functioning in an early step of cytosolic Fe-S biogenesis, facilitating the de novo assembly of a [4Fe-4S] cluster on the scaffold complex CFD1-NBP35. Electrons are transferred to DRE2 from NADPH via the FAD- and FMN-containing protein TAH18. TAH18-DRE2 are also required for the assembly of the diferric tyrosyl radical cofactor of ribonucleotide reductase (RNR), probably by providing electrons for reduction during radical cofactor maturation in the catalytic small subunit RNR2. The chain is Fe-S cluster assembly protein DRE2 from Arthroderma otae (strain ATCC MYA-4605 / CBS 113480) (Microsporum canis).